The following is a 639-amino-acid chain: Probable potassium transport system protein Kup 1 (639 aa).

Residues 1–16 (MALANTGSEAEPVEQS) show a composition bias toward polar residues. The segment at 1 to 21 (MALANTGSEAEPVEQSSHPEI) is disordered. A run of 12 helical transmembrane segments spans residues 29–49 (LMLG…IYAF), 67–87 (ILGV…IKYI), 117–137 (AVIL…AVIT), 154–174 (PTFQ…VFAV), 182–202 (VGLV…LSGL), 220–240 (IVAF…AIFL), 260–280 (IVLA…AGQG), 302–322 (ALIP…QAVI), 354–374 (IYMP…VVGF), 383–403 (AYGI…YVVM), 411–431 (LWVA…FFAS), and 436–456 (VFEG…GMWT).

Belongs to the HAK/KUP transporter (TC 2.A.72) family.

It is found in the cell inner membrane. The enzyme catalyses K(+)(in) + H(+)(in) = K(+)(out) + H(+)(out). Transport of potassium into the cell. Likely operates as a K(+):H(+) symporter. This is Probable potassium transport system protein Kup 1 from Mesorhizobium japonicum (strain LMG 29417 / CECT 9101 / MAFF 303099) (Mesorhizobium loti (strain MAFF 303099)).